We begin with the raw amino-acid sequence, 174 residues long: Protein COFACTOR ASSEMBLY OF COMPLEX C SUBUNIT B CCB3, chloroplastic (174 aa).

A chloroplast-targeting transit peptide spans 1-39 (MTTVTTSFVSFSPALMIFQKKSRRSSPNFRNRSTSLPIV). The Lumenal segment spans residues 40–78 (SATLSHIEEAATTTNLIRQTNSISESLRNISLADLDPGT). The chain crosses the membrane as a helical span at residues 79–99 (AKLAIGILGPALSAFGFLFIL). Residues 100-147 (RIVMSWYPKLPVDKFPYVLAYAPTEPILVQTRKVIPPLAGVDVTPVVW) are Stromal-facing. A helical transmembrane segment spans residues 148–168 (FGLVSFLSEILVGPQGLLVLV). The Lumenal segment spans residues 169-174 (SQQQVN).

This sequence belongs to the YggT family.

The protein resides in the plastid. Its subcellular location is the chloroplast thylakoid membrane. In terms of biological role, required for the biogenesis and accumulation of native cytochrome b6 in the thylakoid membrane. Controls the conversion of apocytochrome b6 to holocytochrome b6. Required for covalent binding of the c-type heme to cytochrome b6. The sequence is that of Protein COFACTOR ASSEMBLY OF COMPLEX C SUBUNIT B CCB3, chloroplastic from Arabidopsis thaliana (Mouse-ear cress).